The following is a 182-amino-acid chain: Oligoribonuclease (182 aa).

Residues 8-171 form the Exonuclease domain; it reads LLWLDMEMTG…ADIYESIDEL (164 aa). Residue Y129 is part of the active site.

This sequence belongs to the oligoribonuclease family.

Its subcellular location is the cytoplasm. Functionally, 3'-to-5' exoribonuclease specific for small oligoribonucleotides. The protein is Oligoribonuclease of Thiobacillus denitrificans (strain ATCC 25259 / T1).